The chain runs to 160 residues: Adenosine 5'-monophosphoramidase HINT3 (160 aa).

In terms of domain architecture, HIT spans 24-132; the sequence is IFCTIAKGDD…LAPYSQLYKW (109 aa). Residues 50–51 and 119–121 each bind AMP; these read DI and HLH. The Histidine triad motif motif lies at 117-121; sequence HLHLH. Catalysis depends on histidine 119, which acts as the Tele-AMP-histidine intermediate.

Belongs to the HINT family. In terms of assembly, forms dimers to octamers and even larger oligomer.

It localises to the cytoplasm. It is found in the nucleus. The catalysed reaction is adenosine 5'-phosphoramidate + H2O = AMP + NH4(+). Exhibits adenosine 5'-monophosphoramidase activity, hydrolyzing purine nucleotide phosphoramidates with a single phosphate group such as adenosine 5'monophosphoramidate (AMP-NH2) to yield AMP and NH2. Hydrolyzes lysyl-AMP (AMP-N-epsilon-(N-alpha-acetyl lysine methyl ester)) generated by lysine tRNA ligase. The chain is Adenosine 5'-monophosphoramidase HINT3 (hint3) from Danio rerio (Zebrafish).